The following is a 273-amino-acid chain: Large ribosomal subunit protein uL2 (273 aa).

The tract at residues 221-262 is disordered; the sequence is RGTAMNPVDHPHGGGEGRNFGKHPVTPWGVQTKGKKTRHNKR. The span at 253–262 shows a compositional bias: basic residues; the sequence is KGKKTRHNKR.

This sequence belongs to the universal ribosomal protein uL2 family. Part of the 50S ribosomal subunit. Forms a bridge to the 30S subunit in the 70S ribosome.

Its function is as follows. One of the primary rRNA binding proteins. Required for association of the 30S and 50S subunits to form the 70S ribosome, for tRNA binding and peptide bond formation. It has been suggested to have peptidyltransferase activity; this is somewhat controversial. Makes several contacts with the 16S rRNA in the 70S ribosome. This chain is Large ribosomal subunit protein uL2, found in Aggregatibacter actinomycetemcomitans (Actinobacillus actinomycetemcomitans).